Reading from the N-terminus, the 277-residue chain is Glutamate racemase (277 aa).

Substrate is bound by residues 9-10 (DS) and 41-42 (YG). The active-site Proton donor/acceptor is the Cys-73. Substrate is bound at residue 74–75 (NT). Residue Cys-183 is the Proton donor/acceptor of the active site. 184-185 (TH) lines the substrate pocket.

The protein belongs to the aspartate/glutamate racemases family.

The catalysed reaction is L-glutamate = D-glutamate. The protein operates within cell wall biogenesis; peptidoglycan biosynthesis. In terms of biological role, provides the (R)-glutamate required for cell wall biosynthesis. The sequence is that of Glutamate racemase from Shewanella denitrificans (strain OS217 / ATCC BAA-1090 / DSM 15013).